Consider the following 875-residue polypeptide: Phosphoenolpyruvate carboxylase (875 aa).

Residues histidine 137 and lysine 542 contribute to the active site.

Belongs to the PEPCase type 1 family. Mg(2+) is required as a cofactor.

It carries out the reaction oxaloacetate + phosphate = phosphoenolpyruvate + hydrogencarbonate. Functionally, forms oxaloacetate, a four-carbon dicarboxylic acid source for the tricarboxylic acid cycle. In Pseudomonas putida (strain ATCC 700007 / DSM 6899 / JCM 31910 / BCRC 17059 / LMG 24140 / F1), this protein is Phosphoenolpyruvate carboxylase.